The chain runs to 195 residues: UPF0314 protein RHE_CH03951 (195 aa).

A run of 4 helical transmembrane segments spans residues 14–34 (AFWF…EYLM), 64–84 (WYTP…YLIL), 128–148 (DSIL…FFAA), and 150–170 (APVA…GYVI).

This sequence belongs to the UPF0314 family.

Its subcellular location is the cell membrane. This is UPF0314 protein RHE_CH03951 from Rhizobium etli (strain ATCC 51251 / DSM 11541 / JCM 21823 / NBRC 15573 / CFN 42).